Consider the following 43-residue polypeptide: Protein PsbN (43 aa).

The chain crosses the membrane as a helical span at residues 5–27; that stretch reads TLVAIFISCLLVSFTGYAPYTAS.

The protein belongs to the PsbN family.

Its subcellular location is the plastid. It is found in the chloroplast thylakoid membrane. Its function is as follows. May play a role in photosystem I and II biogenesis. The sequence is that of Protein PsbN from Anthoceros angustus (Hornwort).